A 543-amino-acid chain; its full sequence is MAKQILYGEEARRSMQKGVDKLADTVKVTLGPKGRNVVLDKKFGAPLITNDGVSIAKEIELEDPYENMGAQLVKEVATKTNDVAGDGTTTATLLAQAIIREGLKNVTAGANPMLIRNGIRLAVDKTVEGLKKVSKNVNGKEDIARVASISAADPEIGKLIADAMEKVGNEGVITVEESKSMGTELDVVEGMQFDRGYLSPYMVTDQEKMEAVLDDPYILITDKKIANIQEILPLLEQIVQQGKKLLIIADDVEGEALATLVVNKLRGTFNCVAVKAPGFGDRRKDMLRDIAILTGGEVISEELGKDLKDVKVEDLGSAESVKISKENTTIVNGRGDKSAIHDRVAQIRGQIEETTSDFDREKLQERLAKLAGGVAVVKVGAASETELKERKMRIEDALAATKAAVEEGIIAGGGTAYINVLPEVRELTSDEPDVQVGINIIVKALEEPVRQIAANAGLEGSVIIEKIINSEKGIGFDALHEKYVDMLSVGIVDPTKVTRSALQNAASVASTFLTTECAVADIPEKDKPEMPGGAPGMGMGGMY.

ATP is bound by residues T29–P32, D86–T90, G413, D477–L479, and D493. Positions E524–Y543 are disordered. Over residues G533–Y543 the composition is skewed to gly residues.

The protein belongs to the chaperonin (HSP60) family. As to quaternary structure, forms a cylinder of 14 subunits composed of two heptameric rings stacked back-to-back. Interacts with the co-chaperonin GroES.

The protein localises to the cytoplasm. It catalyses the reaction ATP + H2O + a folded polypeptide = ADP + phosphate + an unfolded polypeptide.. Together with its co-chaperonin GroES, plays an essential role in assisting protein folding. The GroEL-GroES system forms a nano-cage that allows encapsulation of the non-native substrate proteins and provides a physical environment optimized to promote and accelerate protein folding. The protein is Chaperonin GroEL of Clostridium acetobutylicum (strain ATCC 824 / DSM 792 / JCM 1419 / IAM 19013 / LMG 5710 / NBRC 13948 / NRRL B-527 / VKM B-1787 / 2291 / W).